The chain runs to 372 residues: MRSIIADSKRLVVKVGSSLVTNDGKGLDHAAIGRWAAQIAALRAQGKEVVLVSSGAIAEGMQRLGWSKRPREIDELQAAAAVGQMGLAQVYESRFTEHDIRTAQILLTHADLADRERYLNARSTMLTLLRLGVVPIINENDTVVTDEIKFGDNDTLGALVANLIEGDALIILTDQSGLFTADPRKDPNATLVAEANAGAPELEAMAGGAGSSLGRGGMLTKILAAKRAAHSGANTVIASGRETDVLVRLAAGEAIGTQLIARTARMAARKQWMADHLQVRGHVVIDAGAVEKLTAGGKSLLPIGVIDVQGAFARGEVIACVGPDGREVARGLTNYSSAETKLIHRKPSGEIESVLGYMLEPELIHRDNLVLV.

ATP is bound at residue lysine 14. Substrate is bound by residues serine 54, aspartate 141, and asparagine 153. 173-174 (TD) is an ATP binding site. A PUA domain is found at 280–358 (RGHVVIDAGA…GEIESVLGYM (79 aa)).

Belongs to the glutamate 5-kinase family.

It is found in the cytoplasm. The enzyme catalyses L-glutamate + ATP = L-glutamyl 5-phosphate + ADP. It functions in the pathway amino-acid biosynthesis; L-proline biosynthesis; L-glutamate 5-semialdehyde from L-glutamate: step 1/2. In terms of biological role, catalyzes the transfer of a phosphate group to glutamate to form L-glutamate 5-phosphate. This is Glutamate 5-kinase from Burkholderia lata (strain ATCC 17760 / DSM 23089 / LMG 22485 / NCIMB 9086 / R18194 / 383).